The sequence spans 201 residues: Protein ripply1 (201 aa).

The disordered stretch occupies residues 1 to 29 (MDPAASPAAAPPAAPAAAPAADPAADPAA). A compositionally biased stretch (low complexity) spans 15-29 (PAAAPAADPAADPAA). Residues 57–60 (AYLW) carry the WRPW motif motif. The tract at residues 99–134 (HPVRLYWPKSHSFDYLYSAGEILLNNFPVQATINLY) is ripply homology domain. The segment covering 136–174 (DSDSADNEEDKEEEEEEEEEEDDEEEEEDEDKDVNENEP) has biased composition (acidic residues). The segment at 136–201 (DSDSADNEED…SPDPHSACPN (66 aa)) is disordered.

Belongs to the ripply family. As to expression, expressed in the anterior presomitic mesoderm and somites of stage E9.5 dpc embryos. Also expressed in tongue, diaphragm and intercostal muscles at 16.5 dpc.

Its subcellular location is the nucleus. Its function is as follows. Plays a role in somitogenesis. Essential for transcriptional repression of the segmental patterning genes, thus terminating the segmentation program in the presomitic mesoderm, and also required for the maintenance of rostrocaudal polarity in somites. The protein is Protein ripply1 of Mus musculus (Mouse).